The following is a 155-amino-acid chain: Myosin light chain alkali (155 aa).

EF-hand domains lie at 7-41 (REVENVEFVFEVMGSPGEGIDAVDLGDALRALNLN) and 80-115 (GCYEDFIECLKLYDKEENGTMLLAELQHALLALGES).

In terms of assembly, myosin is a hexamer of 2 heavy chains and 4 light chains. In terms of tissue distribution, indirect flight muscle isoform is found only in the indirect flight muscles. The larval and adult isoform is present in the larval and adult musculature.

The sequence is that of Myosin light chain alkali (Mlc1) from Drosophila melanogaster (Fruit fly).